We begin with the raw amino-acid sequence, 469 residues long: MAGKGYIVRIIGPVVDVKFDEKELPDIYNALEVTNPQNGEKLILEVEQLIGDNTVRAVALDSTDGLTRGLEVVDTGKPIVAPVGKGVLGRILNVVGKPIDEKGDIQAEDYWPIHRPAPKITEQKTEIEVLETGIKVIDLLAPFPKGGKIGFFGGAGVGKTVLVMELIRNIAIEQKGFSVFAGVGERTREGNDLWLEMQEAGVLENTVLVFGQMNEPPGARFRVGLTALTIAEYFRDVEGRDVLLFIDNIFRFVQAGSEVSALLGRMPSAVGYQPTLATDMGELQERITSTQKGSITSVQAIYVPADDITDPAPATTFSHLDASVVLSRKIAELGIYPAVDPLDSTSKILDPAVIGWEHYQVARGVQEVLQRYKDLQDIIAILGMEELTEEDKLIVQRARKIQRFLSQPFFVAERFTGANGKYVPISETVKGFKEILEGKHDSLPEQAFFMVGTIDEAVQKAERLKGSAA.

Residue 153–160 (GGAGVGKT) coordinates ATP.

This sequence belongs to the ATPase alpha/beta chains family. F-type ATPases have 2 components, CF(1) - the catalytic core - and CF(0) - the membrane proton channel. CF(1) has five subunits: alpha(3), beta(3), gamma(1), delta(1), epsilon(1). CF(0) has three main subunits: a(1), b(2) and c(9-12). The alpha and beta chains form an alternating ring which encloses part of the gamma chain. CF(1) is attached to CF(0) by a central stalk formed by the gamma and epsilon chains, while a peripheral stalk is formed by the delta and b chains.

The protein localises to the cell inner membrane. It catalyses the reaction ATP + H2O + 4 H(+)(in) = ADP + phosphate + 5 H(+)(out). Its function is as follows. Produces ATP from ADP in the presence of a proton gradient across the membrane. The catalytic sites are hosted primarily by the beta subunits. The sequence is that of ATP synthase subunit beta from Pseudothermotoga lettingae (strain ATCC BAA-301 / DSM 14385 / NBRC 107922 / TMO) (Thermotoga lettingae).